Consider the following 405-residue polypeptide: S-adenosylmethionine synthase (405 aa).

Gly-141–Asp-146 is an ATP binding site.

It belongs to the AdoMet synthase 2 family. Requires Mg(2+) as cofactor.

The catalysed reaction is L-methionine + ATP + H2O = S-adenosyl-L-methionine + phosphate + diphosphate. It participates in amino-acid biosynthesis; S-adenosyl-L-methionine biosynthesis; S-adenosyl-L-methionine from L-methionine: step 1/1. Catalyzes the formation of S-adenosylmethionine from methionine and ATP. The chain is S-adenosylmethionine synthase from Methanococcus maripaludis (strain C7 / ATCC BAA-1331).